Here is a 119-residue protein sequence, read N- to C-terminus: QRPVAGGRGKDAVIVSATNDVNFDGSYRYSFETSDGQRASQEGALKQVSAPGPDGDTLGEAVRGDFSYTDDAGNQFAIQYTADENGYVPQGAHLPTPPPIPEAIQKALAYIASQPQARS.

A Pyrrolidone carboxylic acid modification is found at Gln-1. Residues 24–98 (DGSYRYSFET…PQGAHLPTPP (75 aa)) enclose the Chitin-binding type R&amp;R domain. Positions 33 to 55 (TSDGQRASQEGALKQVSAPGPDG) are disordered. The O-linked (HexNAc...) threonine glycan is linked to Thr-96.

Functionally, component of the abdominal endocuticle. In Schistocerca gregaria (Desert locust), this protein is Endocuticle structural glycoprotein SgAbd-3.